We begin with the raw amino-acid sequence, 89 residues long: Small ribosomal subunit protein uS15 (89 aa).

The protein belongs to the universal ribosomal protein uS15 family. As to quaternary structure, part of the 30S ribosomal subunit. Forms a bridge to the 50S subunit in the 70S ribosome, contacting the 23S rRNA.

In terms of biological role, one of the primary rRNA binding proteins, it binds directly to 16S rRNA where it helps nucleate assembly of the platform of the 30S subunit by binding and bridging several RNA helices of the 16S rRNA. Its function is as follows. Forms an intersubunit bridge (bridge B4) with the 23S rRNA of the 50S subunit in the ribosome. This chain is Small ribosomal subunit protein uS15, found in Acidothermus cellulolyticus (strain ATCC 43068 / DSM 8971 / 11B).